A 111-amino-acid chain; its full sequence is Large ribosomal subunit protein P1 (111 aa).

Residues 84–111 are disordered; that stretch reads PAEAAAAEEKKEEEKEESDEDMGFGLFD.

Belongs to the eukaryotic ribosomal protein P1/P2 family. As to quaternary structure, P1 and P2 exist as dimers at the large ribosomal subunit. In terms of processing, phosphorylated.

Functionally, plays an important role in the elongation step of protein synthesis. The polypeptide is Large ribosomal subunit protein P1 (Aspergillus fumigatus (strain ATCC MYA-4609 / CBS 101355 / FGSC A1100 / Af293) (Neosartorya fumigata)).